A 588-amino-acid chain; its full sequence is Pleckstrin homology domain-containing family A member 4 (588 aa).

The PH domain occupies 54–153 (PVHIRGWLHK…WLRALGRASR (100 aa)). Disordered stretches follow at residues 155–349 (EGED…QASM) and 495–588 (AGLG…VDHL). Serine 164 is modified (phosphoserine). Positions 183 to 193 (VNRREEGRISE) are enriched in basic and acidic residues. Positions 211-222 (TPNSTVDLQTDT) are enriched in polar residues. Low complexity-rich tracts occupy residues 246–260 (PRPR…PLSA) and 321–334 (QRTQ…GSST). Phosphoserine is present on serine 562.

The protein localises to the cytoplasm. The protein resides in the membrane. In terms of biological role, binds specifically to phosphatidylinositol 3-phosphate (PtdIns3P), but not to other phosphoinositides. The polypeptide is Pleckstrin homology domain-containing family A member 4 (Plekha4) (Mus musculus (Mouse)).